The primary structure comprises 373 residues: Leucine-, isoleucine-, valine-, threonine-, and alanine-binding protein (373 aa).

A signal peptide spans 1 to 26 (MKKGTQRLSRLFAAMAIAGFASYSMA). A disulfide bond links C80 and C105.

This sequence belongs to the leucine-binding protein family.

It is found in the periplasm. In terms of biological role, component of the high-affinity leucine, isoleucine, valine transport system I (LIV-I), which is operative without Na(+) and is specific for alanine and threonine, in addition to branched-chain amino acids. Binds L-leucine, L-isoleucine, L-valine, L-threonine and L-alanine with nanomolar affinities. Can also bind L-homoserine with high affinity. The chain is Leucine-, isoleucine-, valine-, threonine-, and alanine-binding protein (braC) from Pseudomonas aeruginosa (strain ATCC 15692 / DSM 22644 / CIP 104116 / JCM 14847 / LMG 12228 / 1C / PRS 101 / PAO1).